The sequence spans 78 residues: Small ribosomal subunit protein bS18 (78 aa).

It belongs to the bacterial ribosomal protein bS18 family. In terms of assembly, part of the 30S ribosomal subunit. Forms a tight heterodimer with protein bS6.

In terms of biological role, binds as a heterodimer with protein bS6 to the central domain of the 16S rRNA, where it helps stabilize the platform of the 30S subunit. The chain is Small ribosomal subunit protein bS18 from Limosilactobacillus fermentum (strain NBRC 3956 / LMG 18251) (Lactobacillus fermentum).